The primary structure comprises 128 residues: Large ribosomal subunit protein bL19 (128 aa).

The protein belongs to the bacterial ribosomal protein bL19 family.

Its function is as follows. This protein is located at the 30S-50S ribosomal subunit interface and may play a role in the structure and function of the aminoacyl-tRNA binding site. The sequence is that of Large ribosomal subunit protein bL19 from Paracidovorax citrulli (strain AAC00-1) (Acidovorax citrulli).